Consider the following 238-residue polypeptide: Ribosomal RNA small subunit methyltransferase G (238 aa).

Residues Gly-78, Phe-83, 129–130 (AE), and Arg-148 contribute to the S-adenosyl-L-methionine site. Residues 217–238 (KKKETPKKYPRKAGTPAKSPIK) form a disordered region.

This sequence belongs to the methyltransferase superfamily. RNA methyltransferase RsmG family.

It localises to the cytoplasm. Specifically methylates the N7 position of a guanine in 16S rRNA. In Lactococcus lactis subsp. cremoris (strain SK11), this protein is Ribosomal RNA small subunit methyltransferase G.